A 222-amino-acid polypeptide reads, in one-letter code: ATP-dependent dethiobiotin synthetase BioD (222 aa).

12-17 (DAGKTV) contacts ATP. Position 16 (Thr-16) interacts with Mg(2+). The active site involves Lys-37. Residue Ser-41 participates in substrate binding. Residues Asp-54, 116-119 (EGAG), 176-177 (VQ), 206-208 (PYL), and Glu-213 contribute to the ATP site. Asp-54 and Glu-116 together coordinate Mg(2+).

It belongs to the dethiobiotin synthetase family. As to quaternary structure, homodimer. It depends on Mg(2+) as a cofactor.

It localises to the cytoplasm. It catalyses the reaction (7R,8S)-7,8-diammoniononanoate + CO2 + ATP = (4R,5S)-dethiobiotin + ADP + phosphate + 3 H(+). It functions in the pathway cofactor biosynthesis; biotin biosynthesis; biotin from 7,8-diaminononanoate: step 1/2. Catalyzes a mechanistically unusual reaction, the ATP-dependent insertion of CO2 between the N7 and N8 nitrogen atoms of 7,8-diaminopelargonic acid (DAPA, also called 7,8-diammoniononanoate) to form a ureido ring. In Idiomarina loihiensis (strain ATCC BAA-735 / DSM 15497 / L2-TR), this protein is ATP-dependent dethiobiotin synthetase BioD.